Here is a 332-residue protein sequence, read N- to C-terminus: uncharacterized protein (332 aa).

The signal sequence occupies residues 1–32 (MSRDRGARGLRKYGRFALATGAATALSLTASG). A lipid anchor (N-palmitoyl cysteine) is attached at cysteine 33. Cysteine 33 carries the S-diacylglycerol cysteine lipid modification.

The protein localises to the cell membrane. This is an uncharacterized protein from Streptomyces avermitilis (strain ATCC 31267 / DSM 46492 / JCM 5070 / NBRC 14893 / NCIMB 12804 / NRRL 8165 / MA-4680).